A 543-amino-acid chain; its full sequence is CTP synthase (543 aa).

Residues 1–265 are amidoligase domain; it reads MTRYIFVTGG…DDYVVERFGL (265 aa). Residue Ser-13 coordinates CTP. Ser-13 is a binding site for UTP. ATP-binding positions include 14–19 and Asp-71; that span reads SLGKGI. Mg(2+) contacts are provided by Asp-71 and Glu-139. CTP contacts are provided by residues 146 to 148, 186 to 191, and Lys-222; these read DIE and KTKPTQ. UTP contacts are provided by residues 186-191 and Lys-222; that span reads KTKPTQ. Positions 290 to 541 constitute a Glutamine amidotransferase type-1 domain; it reads NIAMVGKYME…VNAALEYKAK (252 aa). Gly-351 is an L-glutamine binding site. Cys-378 acts as the Nucleophile; for glutamine hydrolysis in catalysis. Residues 379–382, Glu-402, and Arg-469 contribute to the L-glutamine site; that span reads LGMQ. Residues His-514 and Glu-516 contribute to the active site.

This sequence belongs to the CTP synthase family. Homotetramer.

The catalysed reaction is UTP + L-glutamine + ATP + H2O = CTP + L-glutamate + ADP + phosphate + 2 H(+). It catalyses the reaction L-glutamine + H2O = L-glutamate + NH4(+). The enzyme catalyses UTP + NH4(+) + ATP = CTP + ADP + phosphate + 2 H(+). It participates in pyrimidine metabolism; CTP biosynthesis via de novo pathway; CTP from UDP: step 2/2. With respect to regulation, allosterically activated by GTP, when glutamine is the substrate; GTP has no effect on the reaction when ammonia is the substrate. The allosteric effector GTP functions by stabilizing the protein conformation that binds the tetrahedral intermediate(s) formed during glutamine hydrolysis. Inhibited by the product CTP, via allosteric rather than competitive inhibition. Functionally, catalyzes the ATP-dependent amination of UTP to CTP with either L-glutamine or ammonia as the source of nitrogen. Regulates intracellular CTP levels through interactions with the four ribonucleotide triphosphates. This is CTP synthase from Stutzerimonas stutzeri (strain A1501) (Pseudomonas stutzeri).